The chain runs to 553 residues: NAD(P)H-quinone oxidoreductase chain 4 2 (553 aa).

Transmembrane regions (helical) follow at residues 6–26, 34–54, 87–107, 115–135, 136–156, 169–189, 210–230, 244–264, 276–296, 312–332, 333–353, 376–396, 418–438, and 487–507; these read FPWL…IPVI, VRWF…YVFL, ISAP…LAAW, LFYF…VAQD, LLLF…LVSI, FLLY…AMAL, ALEL…LAIF, SAPV…YGLI, IYFA…GAFA, VSHM…GISG, AMLQ…LAGV, VFAL…MSGF, VVTV…LLSM, and IFIA…PQLA.

The protein belongs to the complex I subunit 4 family.

The protein resides in the cellular thylakoid membrane. It catalyses the reaction a plastoquinone + NADH + (n+1) H(+)(in) = a plastoquinol + NAD(+) + n H(+)(out). It carries out the reaction a plastoquinone + NADPH + (n+1) H(+)(in) = a plastoquinol + NADP(+) + n H(+)(out). NDH-1 shuttles electrons from NAD(P)H, via FMN and iron-sulfur (Fe-S) centers, to quinones in the respiratory chain. The immediate electron acceptor for the enzyme in this species is believed to be plastoquinone. Couples the redox reaction to proton translocation (for every two electrons transferred, four hydrogen ions are translocated across the cytoplasmic membrane), and thus conserves the redox energy in a proton gradient. This chain is NAD(P)H-quinone oxidoreductase chain 4 2, found in Microcystis aeruginosa (strain NIES-843 / IAM M-2473).